Reading from the N-terminus, the 685-residue chain is uncharacterized protein (685 aa).

Disordered stretches follow at residues 502-538 (NLNQ…SLNK) and 635-685 (RSKR…IHNA). Over residues 518–538 (SSENMTKFPSSRGKSTVSLNK) the composition is skewed to polar residues. Residues 675–685 (KLKKSLIIHNA) are compositionally biased toward basic residues.

This is an uncharacterized protein from Homo sapiens (Human).